The chain runs to 404 residues: Type I restriction enzyme EcoR124I/EcoR124II specificity subunit (404 aa).

Positions 1–153 (MSEMSYLEKL…PIPCPDNPEK (153 aa)) are target-recognition domain 1. The segment at 154–199 (SLAIQSEIVRILDKFTALTAELTAELNMRKKQYNYYRDQLLSFKEG) is conserved region 1. The interval 200–349 (EVEWKTLGEI…KLFSFKIPVP (150 aa)) is target-recognition domain 2. The interval 350 to 404 (NINEQQRIVEILDKFDTLTNSITEGLPREIELRQKQYEYYRDLLFSFPKPETVSN) is conserved region 2.

This sequence belongs to the type-I restriction system S methylase family. As to quaternary structure, the type I restriction/modification system is composed of three polypeptides R, M and S; the restriction enzyme has stoichiometry R(2)M(2)S(1) while the methyltransferase is M(2)S(1). There is an equilibrium between R(2)M(2)S(1) and R(1)M(2)S(1); the latter is methylation and translocation proficient but restriction deficient. (Microbial infection) Holoenenzyme interacts with Escherichia phage T7 protein Ocr; this interaction leads to the inhibition of the restriction activity, but may still allow methylation and translocation.

In terms of biological role, the specificity (S) subunit of a type I restriction enzyme; this subunit dictates DNA sequence specificity. The presence or absence of a 4-residue repeat changes the sequence specificity; a third copy of TAEL inserted at position 179-180 changes the recognition site from 5'-GAAN(6)RTCG-3' (for EcoR124I) to 5'-GAAN(7)RTCG-3' (for EcoR124II). The M and S subunits together form a methyltransferase (MTase) that methylates A-3 on the top and bottom strand of the sequence 5'-GAAN(7)RTCG-3'. In the presence of the R subunit the complex can also act as an endonuclease, binding to the same target sequence but cutting the DNA some distance from this site. Whether the DNA is cut or modified depends on the methylation state of the target sequence. When the target site is unmodified, the DNA is cut. When the target site is hemimethylated, the complex acts as a maintenance MTase modifying the DNA so that both strands become methylated. After locating a non-methylated recognition site, the enzyme complex serves as a molecular motor that translocates DNA in an ATP-dependent manner until a collision occurs that triggers cleavage. The R(1)M(2)S(1) complex translocates an average of 555 bp/second on nicked DNA; the R(2)M(2)S(1) complex translocates at double that speed. The 2 R subunit motors are independent and track along the helical pitch of the DNA, inducing positive supercoiling ahead of themselves. The chain is Type I restriction enzyme EcoR124I/EcoR124II specificity subunit (hsdS) from Escherichia coli.